The chain runs to 266 residues: Electron transfer flavoprotein subunit beta (266 aa).

It belongs to the ETF beta-subunit/FixA family. In terms of assembly, heterodimer of an alpha and a beta subunit. The cofactor is FAD. AMP serves as cofactor.

Functionally, the electron transfer flavoprotein serves as a specific electron acceptor for other dehydrogenases. It transfers the electrons to the main respiratory chain via ETF-ubiquinone oxidoreductase (ETF dehydrogenase). This Mycobacterium leprae (strain TN) protein is Electron transfer flavoprotein subunit beta (etfB).